A 258-amino-acid chain; its full sequence is Thiazole synthase (258 aa).

Residue Lys100 is the Schiff-base intermediate with DXP of the active site. Residues Gly161, 187–188 (AG), and 209–210 (NT) each bind 1-deoxy-D-xylulose 5-phosphate.

Belongs to the ThiG family. In terms of assembly, homotetramer. Forms heterodimers with either ThiH or ThiS.

It is found in the cytoplasm. It catalyses the reaction [ThiS sulfur-carrier protein]-C-terminal-Gly-aminoethanethioate + 2-iminoacetate + 1-deoxy-D-xylulose 5-phosphate = [ThiS sulfur-carrier protein]-C-terminal Gly-Gly + 2-[(2R,5Z)-2-carboxy-4-methylthiazol-5(2H)-ylidene]ethyl phosphate + 2 H2O + H(+). The protein operates within cofactor biosynthesis; thiamine diphosphate biosynthesis. Functionally, catalyzes the rearrangement of 1-deoxy-D-xylulose 5-phosphate (DXP) to produce the thiazole phosphate moiety of thiamine. Sulfur is provided by the thiocarboxylate moiety of the carrier protein ThiS. In vitro, sulfur can be provided by H(2)S. The sequence is that of Thiazole synthase from Campylobacter jejuni subsp. jejuni serotype O:2 (strain ATCC 700819 / NCTC 11168).